Here is a 171-residue protein sequence, read N- to C-terminus: Protein-export protein SecB (171 aa).

The protein belongs to the SecB family. Homotetramer, a dimer of dimers. One homotetramer interacts with 1 SecA dimer.

It is found in the cytoplasm. One of the proteins required for the normal export of preproteins out of the cell cytoplasm. It is a molecular chaperone that binds to a subset of precursor proteins, maintaining them in a translocation-competent state. It also specifically binds to its receptor SecA. The chain is Protein-export protein SecB from Granulibacter bethesdensis (strain ATCC BAA-1260 / CGDNIH1).